Consider the following 310-residue polypeptide: Putative carbonic anhydrase 5 (310 aa).

The signal sequence occupies residues 1 to 20 (MPSHLLVLSLLVALLVVVSC). One can recognise an Alpha-carbonic anhydrase domain in the interval 26–280 (HGWGYDENNG…LNGRRIQYRP (255 aa)). Residues His-117, His-119, and His-142 each coordinate Zn(2+). Residue 223–224 (TT) participates in substrate binding.

It belongs to the alpha-carbonic anhydrase family.

It localises to the secreted. The catalysed reaction is hydrogencarbonate + H(+) = CO2 + H2O. Its function is as follows. Reversible hydration of carbon dioxide. This chain is Putative carbonic anhydrase 5 (cah-5), found in Caenorhabditis elegans.